The sequence spans 267 residues: U6 snRNA phosphodiesterase 1 (267 aa).

Positions 1–13 (MSSAPLVGYSSSG) are enriched in polar residues. The tract at residues 1–74 (MSSAPLVGYS…DSAKHGGRIR (74 aa)) is disordered. The active-site Proton acceptor is the H122. Residue 122-124 (HVS) participates in AMP binding. UMP-binding positions include Q166, Y204, and 208-212 (SFHIS). Residues Y204 and 206–212 (DPSFHIS) each bind AMP. H210 acts as the Proton donor in catalysis.

Belongs to the 2H phosphoesterase superfamily. USB1 family. As to quaternary structure, interacts with PLRG1, CDC5L and PRPF19.

The protein resides in the nucleus. It catalyses the reaction a 3'-end uridylyl-uridine-RNA = a 3'-end 2',3'-cyclophospho-uridine-RNA + uridine. The enzyme catalyses a 3'-end uridylyl-adenosine-RNA = a 3'-end 2',3'-cyclophospho-uridine-RNA + adenosine. In terms of biological role, 3'-5' RNA exonuclease that trims the 3' end of oligo(U) and oligo(A) tracts of the pre-U6 small nuclear RNA (snRNA) molecule, leading to the formation of a mature U6 snRNA 3' end-terminated with a 2',3'-cyclic phosphate. Participates in the U6 snRNA 3' end processing that prevents U6 snRNA degradation. In addition also removes uridines from the 3' end of U6atac snRNA and possibly the vault RNA VTRNA1-1. This Mus musculus (Mouse) protein is U6 snRNA phosphodiesterase 1.